The primary structure comprises 546 residues: Phenylalanine--tRNA ligase beta subunit (546 aa).

The B5 domain maps to 266–342 (LAPAERVVSV…IAYGIENFDA (77 aa)). Positions 320, 326, 329, and 330 each coordinate Mg(2+).

Belongs to the phenylalanyl-tRNA synthetase beta subunit family. Type 2 subfamily. In terms of assembly, tetramer of two alpha and two beta subunits. The cofactor is Mg(2+).

It localises to the cytoplasm. It carries out the reaction tRNA(Phe) + L-phenylalanine + ATP = L-phenylalanyl-tRNA(Phe) + AMP + diphosphate + H(+). The polypeptide is Phenylalanine--tRNA ligase beta subunit (Methanoculleus marisnigri (strain ATCC 35101 / DSM 1498 / JR1)).